The chain runs to 237 residues: Phosphoribosylaminoimidazole-succinocarboxamide synthase (237 aa).

It belongs to the SAICAR synthetase family.

The catalysed reaction is 5-amino-1-(5-phospho-D-ribosyl)imidazole-4-carboxylate + L-aspartate + ATP = (2S)-2-[5-amino-1-(5-phospho-beta-D-ribosyl)imidazole-4-carboxamido]succinate + ADP + phosphate + 2 H(+). Its pathway is purine metabolism; IMP biosynthesis via de novo pathway; 5-amino-1-(5-phospho-D-ribosyl)imidazole-4-carboxamide from 5-amino-1-(5-phospho-D-ribosyl)imidazole-4-carboxylate: step 1/2. In Pectobacterium atrosepticum (strain SCRI 1043 / ATCC BAA-672) (Erwinia carotovora subsp. atroseptica), this protein is Phosphoribosylaminoimidazole-succinocarboxamide synthase.